The chain runs to 453 residues: Nuclear distribution protein nudF-2 (453 aa).

Residues 9–41 enclose the LisH domain; it reads QADELHRALIAYLTAANLPNTAAALREELNLSE. A coiled-coil region spans residues 62 to 88; the sequence is SVVRLQKKIMDLESRNHILQSELDNAT. Residues 84-107 are disordered; that stretch reads LDNATPTSRQNKDPVAWLPRAPPR. 7 WD repeats span residues 112–153, 155–195, 199–239, 242–281, 286–345, 347–386, and 391–449; these read SHRD…RTIK, HTKA…KNIR, GHDH…CVKT, GHAE…PEPK, GHEH…IKTL, GHDN…KCVK, and AHGH…LNVR.

Belongs to the WD repeat LIS1/nudF family. As to quaternary structure, self-associates. Interacts with ro-11/nde1 and dynein.

It is found in the cytoplasm. It localises to the cytoskeleton. The protein resides in the spindle pole. In terms of biological role, positively regulates the activity of the minus-end directed microtubule motor protein dynein. May enhance dynein-mediated microtubule sliding by targeting dynein to the microtubule plus end. Required for nuclear migration during vegetative growth as well as development. Required for retrograde early endosome (EE) transport from the hyphal tip. Required for localization of dynein to the mitotic spindle poles. Recruits additional proteins to the dynein complex at SPBs. This Neurospora crassa (strain ATCC 24698 / 74-OR23-1A / CBS 708.71 / DSM 1257 / FGSC 987) protein is Nuclear distribution protein nudF-2 (nmp-1).